The chain runs to 533 residues: NEDD8-activating enzyme E1 regulatory subunit (533 aa).

The segment at 330 to 343 is interaction with uba3; that stretch reads DMIADSDKFIKLQN.

Belongs to the ubiquitin-activating E1 family. ULA1 subfamily. As to quaternary structure, heterodimer of uba3 and nae1. The complex binds nedd8 and ube2m.

It functions in the pathway protein modification; protein neddylation. In terms of biological role, regulatory subunit of the dimeric uba3-nae1 E1 enzyme. E1 activates nedd8 by first adenylating its C-terminal glycine residue with ATP, thereafter linking this residue to the side chain of the catalytic cysteine, yielding a nedd8-uba3 thioester and free AMP. E1 finally transfers nedd8 to the catalytic cysteine of ube2m. The covalent attachment of nedd8 to target proteins is known as 'neddylation' and the process is involved in the regulation of cell growth, viability and development. The polypeptide is NEDD8-activating enzyme E1 regulatory subunit (nae1) (Danio rerio (Zebrafish)).